The following is a 291-amino-acid chain: 33 kDa chaperonin (291 aa).

Disulfide bonds link cysteine 237–cysteine 239 and cysteine 270–cysteine 273.

The protein belongs to the HSP33 family. Under oxidizing conditions two disulfide bonds are formed involving the reactive cysteines. Under reducing conditions zinc is bound to the reactive cysteines and the protein is inactive.

The protein localises to the cytoplasm. In terms of biological role, redox regulated molecular chaperone. Protects both thermally unfolding and oxidatively damaged proteins from irreversible aggregation. Plays an important role in the bacterial defense system toward oxidative stress. The chain is 33 kDa chaperonin from Halalkalibacterium halodurans (strain ATCC BAA-125 / DSM 18197 / FERM 7344 / JCM 9153 / C-125) (Bacillus halodurans).